The primary structure comprises 1486 residues: Chromosome partition protein MukB (1486 aa).

Gly34–Ser41 provides a ligand contact to ATP. Coiled coils occupy residues Leu326–Gln418, Leu444–Gln480, and Arg509–Val603. The flexible hinge stretch occupies residues Pro666–Arg783. Coiled-coil stretches lie at residues Glu835–Glu923, Glu977–Ala1115, and Val1209–Ser1266.

Belongs to the SMC family. MukB subfamily. As to quaternary structure, homodimerization via its hinge domain. Binds to DNA via its C-terminal region. Interacts, and probably forms a ternary complex, with MukE and MukF via its C-terminal region. The complex formation is stimulated by calcium or magnesium. Interacts with tubulin-related protein FtsZ.

It localises to the cytoplasm. The protein localises to the nucleoid. Its function is as follows. Plays a central role in chromosome condensation, segregation and cell cycle progression. Functions as a homodimer, which is essential for chromosome partition. Involved in negative DNA supercoiling in vivo, and by this means organize and compact chromosomes. May achieve or facilitate chromosome segregation by condensation DNA from both sides of a centrally located replisome during cell division. The chain is Chromosome partition protein MukB from Shigella boydii serotype 4 (strain Sb227).